We begin with the raw amino-acid sequence, 423 residues long: COUP transcription factor 1 (423 aa).

The disordered stretch occupies residues 1–81; sequence MAMVVSSWRD…QGPPGSGQSQ (81 aa). A compositionally biased stretch (low complexity) spans 39–67; it reads EQQQQAGSGAPHTPQTPGQPGAPATPGTA. A DNA-binding region (nuclear receptor) is located at residues 83–158; sequence HIECVVCGDK…VGMRREAVQR (76 aa). 2 consecutive NR C4-type zinc fingers follow at residues 86 to 106 and 122 to 146; these read CVVC…CEGC and CRAN…LKKC. One can recognise an NR LBD domain in the interval 184–410; sequence YLSGYISLLL…TLIRDMLLSG (227 aa).

This sequence belongs to the nuclear hormone receptor family. NR2 subfamily. In terms of assembly, binds DNA as dimer; homodimer and probable heterodimer with NR2F6. Interacts with GTF2B; this interaction is direct. Interacts with COPS2.

It is found in the nucleus. In terms of biological role, coup (chicken ovalbumin upstream promoter) transcription factor binds to the ovalbumin promoter and, in conjunction with another protein (S300-II) stimulates initiation of transcription. Binds to both direct repeats and palindromes of the 5'-AGGTCA-3' motif. Represses transcriptional activity of LHCG. This Homo sapiens (Human) protein is COUP transcription factor 1 (NR2F1).